A 173-amino-acid polypeptide reads, in one-letter code: Alpha-crystallin A chain (173 aa).

Position 1 is an N-acetylmethionine (Met1). Residues 1–63 (MDITIQHPWF…RTVLESGISE (63 aa)) form a required for complex formation with BFSP1 and BFSP2 region. At Gln6 the chain carries Deamidated glutamine; partial. Residue Ser45 is modified to Phosphoserine. Gln50 bears the Deamidated glutamine; partial mark. The sHSP domain occupies 52 to 164 (LFRTVLESGI…SDRSIPVSRE (113 aa)). Residue Lys99 is modified to N6-acetyllysine. The Zn(2+) site is built by His100, Glu102, and His107. Position 122 is a phosphoserine (Ser122). Position 123 is a deamidated asparagine; partial (Asn123). The disordered stretch occupies residues 144–173 (PKIHSNMESSHSDRSIPVSREEKPTLAPSS). Residues 153-167 (SHSDRSIPVSREEKP) show a composition bias toward basic and acidic residues. Residue His154 participates in Zn(2+) binding. A glycan (O-linked (GlcNAc) serine) is linked at Ser162.

It belongs to the small heat shock protein (HSP20) family. In terms of assembly, heteromer composed of three CRYAA and one CRYAB subunits. Inter-subunit bridging via zinc ions enhances stability, which is crucial as there is no protein turn over in the lens. Can also form homodimers and homotetramers (dimers of dimers) which serve as the building blocks of homooligomers. Within homooligomers, the zinc-binding motif is created from residues of 3 different molecules. His-100 and Glu-102 from one molecule are ligands of the zinc ion, and His-107 and His-154 residues from additional molecules complete the site with tetrahedral coordination geometry. Part of a complex required for lens intermediate filament formation composed of BFSP1, BFSP2 and CRYAA. Acetylation at Lys-99 may increase chaperone activity. In terms of processing, undergoes age-dependent proteolytical cleavage at the C-terminus.

Its subcellular location is the cytoplasm. It localises to the nucleus. Functionally, contributes to the transparency and refractive index of the lens. Acts as a chaperone, preventing aggregation of various proteins under a wide range of stress conditions. Required for the correct formation of lens intermediate filaments as part of a complex composed of BFSP1, BFSP2 and CRYAA. The protein is Alpha-crystallin A chain (CRYAA) of Didelphis virginiana (North American opossum).